A 76-amino-acid polypeptide reads, in one-letter code: UPF0291 protein BA_1897/GBAA_1897/BAS1759 (76 aa).

This sequence belongs to the UPF0291 family.

The protein resides in the cytoplasm. The polypeptide is UPF0291 protein BA_1897/GBAA_1897/BAS1759 (Bacillus anthracis).